Consider the following 247-residue polypeptide: Small ribosomal subunit protein uS2 (247 aa).

It belongs to the universal ribosomal protein uS2 family.

The protein is Small ribosomal subunit protein uS2 of Cupriavidus metallidurans (strain ATCC 43123 / DSM 2839 / NBRC 102507 / CH34) (Ralstonia metallidurans).